The primary structure comprises 430 residues: Enolase (430 aa).

Position 167 (glutamine 167) interacts with (2R)-2-phosphoglycerate. Glutamate 209 serves as the catalytic Proton donor. Mg(2+) is bound by residues aspartate 245, glutamate 286, and aspartate 313. The (2R)-2-phosphoglycerate site is built by lysine 338, arginine 367, serine 368, and lysine 389. Residue lysine 338 is the Proton acceptor of the active site.

The protein belongs to the enolase family. Requires Mg(2+) as cofactor.

The protein resides in the cytoplasm. The protein localises to the secreted. It is found in the cell surface. It carries out the reaction (2R)-2-phosphoglycerate = phosphoenolpyruvate + H2O. The protein operates within carbohydrate degradation; glycolysis; pyruvate from D-glyceraldehyde 3-phosphate: step 4/5. In terms of biological role, catalyzes the reversible conversion of 2-phosphoglycerate (2-PG) into phosphoenolpyruvate (PEP). It is essential for the degradation of carbohydrates via glycolysis. The protein is Enolase of Synechococcus sp. (strain WH7803).